A 376-amino-acid chain; its full sequence is MANQKDTAETLARTPLYQLGVELKARLTSFGGWEMPVQFSGITREHEAVRNAAGMFDISHMGKFTLQGKNLISQLQGLVPSDLSRLQPGQAQYTVLLNPQGGIIDDIIVYYQGEDNTGTQQAFIIVNAATTSKDKAWILSHLDQNQVQFQDISPAKVLIAIQGPKAIGYLQPFVQQNLQPIKAFGHLEATVLGQAGFIARTGYTGEDGFEILVDPEVGVELWRSLYDAGVIPCGLGARDTLRLEAAMALYGQDIDDNTTPLEAGLGWLVHLDTKGDFIGRSVLEQQKATGVQRRLIGLQTQGRNIARHGYQVLSDGKVVGGVTSGTLSPTLGYPVALAYVPSKLAKVGQPLEVEIRGKAYPAVVVKRPFYRSSNKG.

It belongs to the GcvT family. In terms of assembly, the glycine cleavage system is composed of four proteins: P, T, L and H.

The enzyme catalyses N(6)-[(R)-S(8)-aminomethyldihydrolipoyl]-L-lysyl-[protein] + (6S)-5,6,7,8-tetrahydrofolate = N(6)-[(R)-dihydrolipoyl]-L-lysyl-[protein] + (6R)-5,10-methylene-5,6,7,8-tetrahydrofolate + NH4(+). The glycine cleavage system catalyzes the degradation of glycine. This chain is Aminomethyltransferase, found in Nostoc sp. (strain PCC 7120 / SAG 25.82 / UTEX 2576).